The primary structure comprises 164 residues: CB1 cannabinoid receptor-interacting protein 1 (164 aa).

Belongs to the CNRIP family. In terms of assembly, interacts with the cannabinoid receptor CNR1 (via C-terminus). Does not interact with cannabinoid receptor CNR2.

Its function is as follows. Suppresses cannabinoid receptor CNR1-mediated tonic inhibition of voltage-gated calcium channels. Does not suppress cannabinoid receptor CNR1-mediated tonic inhibition of voltage-gated calcium channels. The protein is CB1 cannabinoid receptor-interacting protein 1 (CNRIP1) of Homo sapiens (Human).